The chain runs to 151 residues: 6,7-dimethyl-8-ribityllumazine synthase (151 aa).

Residues Phe-15, 49–51 (AVE), and 73–75 (AVI) each bind 5-amino-6-(D-ribitylamino)uracil. 78–79 (ET) serves as a coordination point for (2S)-2-hydroxy-3-oxobutyl phosphate. The Proton donor role is filled by His-81. Position 106 (Phe-106) interacts with 5-amino-6-(D-ribitylamino)uracil. Arg-120 serves as a coordination point for (2S)-2-hydroxy-3-oxobutyl phosphate.

This sequence belongs to the DMRL synthase family. As to quaternary structure, forms an icosahedral capsid composed of 60 subunits, arranged as a dodecamer of pentamers.

The catalysed reaction is (2S)-2-hydroxy-3-oxobutyl phosphate + 5-amino-6-(D-ribitylamino)uracil = 6,7-dimethyl-8-(1-D-ribityl)lumazine + phosphate + 2 H2O + H(+). It functions in the pathway cofactor biosynthesis; riboflavin biosynthesis; riboflavin from 2-hydroxy-3-oxobutyl phosphate and 5-amino-6-(D-ribitylamino)uracil: step 1/2. Catalyzes the formation of 6,7-dimethyl-8-ribityllumazine by condensation of 5-amino-6-(D-ribitylamino)uracil with 3,4-dihydroxy-2-butanone 4-phosphate. This is the penultimate step in the biosynthesis of riboflavin. The chain is 6,7-dimethyl-8-ribityllumazine synthase from Coxiella burnetii (strain Dugway 5J108-111).